Consider the following 506-residue polypeptide: MFTLVGLCLTIVHVAFAVVYFYLTWYHKYWDKRGVVTAEPLTILGSYPGILINKSRSLILDVQDVYNKYKDKYRTVGTFITRQPQLLVLDPALAHEILVDKFSHFRDTITSSFVGHNPDDKYVAGSPFFSAGDKWKRLRSENVGGLTPSRLKMAYSIWEQSGRKLVEYIERARREQGDIIETRDLAYRFTANAMADFIWGIDAGSLSGKVGEIGDFQKTSTDWSAHAFSSMIRFNKTLVAIFVRKLFSMRFFTKATDEFFLRLTQDAVNLRQGGSGEGRTDYLSHLIQLQQRGNSIHDSVGHALTVHLDGFETSGAVLYHMLYSLSEHHEEQEKLRSEILEALASEGQISYDQINNLPYLDQCFNESLRLTTPIGFFMRICTKPTQINLGDDKTLDLEPGVTVMVPAYQYHHDNDIYPEASEFRPDRFENGAASVLTKRGCFLPFGDGPRICLGMRVGQLSVKTAIVHILSNYQVEQMKKVPLGADSGMGIFLNGDVELKYTKLQK.

Residues Thr-75, Thr-78, and Thr-81 each carry the phosphothreonine modification. A heme-binding site is contributed by Cys-452.

Belongs to the cytochrome P450 family. Requires heme as cofactor.

The protein localises to the endoplasmic reticulum membrane. Its subcellular location is the microsome membrane. Its function is as follows. May be involved in the metabolism of insect hormones and in the breakdown of synthetic insecticides. This Drosophila melanogaster (Fruit fly) protein is Probable cytochrome P450 309a1 (Cyp309a1).